The following is a 255-amino-acid chain: Aliphatic sulfonates import ATP-binding protein SsuB (255 aa).

In terms of domain architecture, ABC transporter spans 12-233 (LLLNAVSKHY…RLGSVRLAEL (222 aa)). 44 to 51 (GRSGGGKS) is an ATP binding site.

The protein belongs to the ABC transporter superfamily. Aliphatic sulfonates importer (TC 3.A.1.17.2) family. In terms of assembly, the complex is composed of two ATP-binding proteins (SsuB), two transmembrane proteins (SsuC) and a solute-binding protein (SsuA).

The protein resides in the cell inner membrane. The catalysed reaction is ATP + H2O + aliphatic sulfonate-[sulfonate-binding protein]Side 1 = ADP + phosphate + aliphatic sulfonateSide 2 + [sulfonate-binding protein]Side 1.. Its function is as follows. Part of the ABC transporter complex SsuABC involved in aliphatic sulfonates import. Responsible for energy coupling to the transport system. The sequence is that of Aliphatic sulfonates import ATP-binding protein SsuB from Shigella flexneri serotype 5b (strain 8401).